The sequence spans 720 residues: Calcium/calmodulin-dependent protein kinase type II (720 aa).

In terms of domain architecture, Protein kinase spans 12–269 (YDVKEELGKG…ADQALKVPWI (258 aa)). Residues 18–26 (LGKGAFSVV) and K41 contribute to the ATP site. Residue D134 is the Proton acceptor of the active site. Phosphothreonine; by autocatalysis is present on T284. 2 disordered regions span residues 317–345 (SDST…QPTS) and 504–586 (DNLS…NLSA). Polar residues-rich tracts occupy residues 504–514 (DNLSASTSSDL) and 526–540 (PPST…SQTI). Low complexity predominate over residues 569–586 (SSSNSSTASKSSSTNLSA).

Belongs to the protein kinase superfamily. CAMK Ser/Thr protein kinase family. CaMK subfamily. In terms of assembly, dodecamer. Subunits are tightly packed around a central ring-shaped scaffold with extensive contacts between the regulatory segment of one kinase and the catalytic domain of another enabling cooperative activation of a subunit by the adjacent molecule. Interacts with and phosphorylates daf-16; the interaction promotes daf-16 nuclear localization. Interacts with egl-2 and tir-1. Interacts with nsy-1. Mg(2+) serves as cofactor. As to expression, expressed in the nervous system. Observed in the ADF and AWC neurons. Position in AWC neurons is regulated by microtubules. Localized to clusters in ventral cord neurites which appear to be required for glr-1 trafficking. Also present in oocytes.

The protein resides in the cytoplasm. It is found in the cell projection. It localises to the axon. Its subcellular location is the perikaryon. It catalyses the reaction L-seryl-[protein] + ATP = O-phospho-L-seryl-[protein] + ADP + H(+). The enzyme catalyses L-threonyl-[protein] + ATP = O-phospho-L-threonyl-[protein] + ADP + H(+). Ca2(+)/calmodulin binding removes an autoinhibitory regulatory segment located C-terminal to the kinase domain. This releases the catalytic activity of the enzyme and makes accessible a regulatory residue Thr-284. Phosphorylation of Thr-284 by another kinase domain within the oligomeric holoenzyme keeps CaMKII active in the absence of Ca(2+)/calmodulin by preventing the rebinding of the regulatory segment to the kinase domain and by increasing the affinity of calmodulin for the enzyme. Can respond to high-frequency Ca(2+) pulses to become Ca(2+) independent. In terms of biological role, acts in the signaling of a variety of pathways and processes. Phosphorylates 'Ser-319' of daf-16 in response to stress signals, such as heat, starvation and oxidation, which plays a role in prolonging lifespan. Required for viability under chronic osmotic stress in which it acts downstream of osr-1. Has roles in locomotion, oocyte maturation, brood size, egg laying, defecation, meiotic maturation and neuronal cell fate specification. Required for the regulation of synaptic density and neuromuscular junction morphology. Regulates the synaptic trafficking of glr-1. Bidirectional modulator of neurotransmitter release with negative modulatory effects mainly mediated via slo-1 activation. Involved in activation of ADF neurons and increased tph-1 transcription following exposure to pathogenic bacteria which leads to learned olfactory aversion to the bacteria. Implicated in the muscle regulation of spicule protraction. In conjunction with egl-2 has a role in the suppression of mating behavior under food deprivation to encourage foraging. Involved in restricting str-2 expression to only one of the two AWC neurons. May suppress the functional response to an internal pacemaker, perhaps by modulating the activity of the IP3 receptor. In Caenorhabditis elegans, this protein is Calcium/calmodulin-dependent protein kinase type II (unc-43).